Consider the following 187-residue polypeptide: UPF0301 protein YqgE (187 aa).

It belongs to the UPF0301 (AlgH) family.

This chain is UPF0301 protein YqgE, found in Shigella boydii serotype 4 (strain Sb227).